The primary structure comprises 455 residues: Beta-1,4-mannosyltransferase bre-3 (455 aa).

It belongs to the glycosyltransferase 2 family.

The protein resides in the cytoplasm. It participates in protein modification; protein glycosylation. Glycosyltransferase with a proposed role in glycosphingolipid biosynthesis. Involved in susceptibility to pore-forming crystal toxins in conjunction with bre-1, bre-2 and bre-4. Involved in resistance to the nematotoxic C.cinerea galectin Cgl2. Has a role in determining brood size. The polypeptide is Beta-1,4-mannosyltransferase bre-3 (Caenorhabditis briggsae).